The primary structure comprises 237 residues: Sugar fermentation stimulation protein homolog (237 aa).

It belongs to the SfsA family.

The chain is Sugar fermentation stimulation protein homolog from Pseudomonas putida (strain ATCC 47054 / DSM 6125 / CFBP 8728 / NCIMB 11950 / KT2440).